A 391-amino-acid polypeptide reads, in one-letter code: Phosphatidate cytidylyltransferase 4, chloroplastic (391 aa).

The N-terminal 61 residues, 1-61, are a transit peptide targeting the chloroplast; sequence MATFAELVLS…SVSRRFLTAV (61 aa). 6 helical membrane-spanning segments follow: residues 102-122, 175-195, 202-222, 254-274, 298-318, and 321-341; these read IFGI…GWVF, FGNI…ALLV, FAQL…PSFW, VGLV…TFAF, IVGL…LSWP, and LFSS…GDLT.

It belongs to the CDS family. It depends on Mg(2+) as a cofactor.

It localises to the plastid. The protein localises to the chloroplast membrane. It catalyses the reaction a 1,2-diacyl-sn-glycero-3-phosphate + CTP + H(+) = a CDP-1,2-diacyl-sn-glycerol + diphosphate. It participates in phospholipid metabolism; CDP-diacylglycerol biosynthesis; CDP-diacylglycerol from sn-glycerol 3-phosphate: step 3/3. Its activity is regulated as follows. Highest activities is obtained at about 30 mM CTP and 2 mM phosphatidic acid (PA). In terms of biological role, may be involved in the synthesis of minor phospholipids and in modulation of IP3-mediated signal transduction. Promotes the biosynthesis of plastidial phosphatidylglycerol (PG) which is required for structure and function of thylakoid membranes and, hence, for photoautotrophic growth. The chain is Phosphatidate cytidylyltransferase 4, chloroplastic from Arabidopsis thaliana (Mouse-ear cress).